The following is a 124-amino-acid chain: Ribonuclease pancreatic (124 aa).

Residues 1 to 13 show a composition bias toward basic and acidic residues; it reads KESAAAKFERQHM. The segment at 1–24 is disordered; that stretch reads KESAAAKFERQHMDSSTSSASSSN. K7 and R10 together coordinate substrate. The active-site Proton acceptor is the H12. Disulfide bonds link C26-C84, C40-C95, C58-C110, and C65-C72. Substrate is bound by residues 41 to 45, K66, and R85; that span reads KPVNT. H119 functions as the Proton donor in the catalytic mechanism.

The protein belongs to the pancreatic ribonuclease family. As to quaternary structure, monomer. Interacts with and forms tight 1:1 complexes with RNH1. Dimerization of two such complexes may occur. Interaction with RNH1 inhibits this protein. Pancreas.

It is found in the secreted. The enzyme catalyses an [RNA] containing cytidine + H2O = an [RNA]-3'-cytidine-3'-phosphate + a 5'-hydroxy-ribonucleotide-3'-[RNA].. It carries out the reaction an [RNA] containing uridine + H2O = an [RNA]-3'-uridine-3'-phosphate + a 5'-hydroxy-ribonucleotide-3'-[RNA].. Functionally, endonuclease that catalyzes the cleavage of RNA on the 3' side of pyrimidine nucleotides. Acts on single-stranded and double-stranded RNA. The sequence is that of Ribonuclease pancreatic (RNASE1) from Connochaetes taurinus (Blue wildebeest).